The primary structure comprises 208 residues: Cytochrome c biogenesis ATP-binding export protein CcmA (208 aa).

The region spanning 3–206 is the ABC transporter domain; it reads LSGKDLAAHR…LEKFVPSQER (204 aa). Residue 35–42 coordinates ATP; it reads GPNGIGKS.

This sequence belongs to the ABC transporter superfamily. CcmA exporter (TC 3.A.1.107) family. In terms of assembly, the complex is composed of two ATP-binding proteins (CcmA) and two transmembrane proteins (CcmB).

It is found in the cell inner membrane. The enzyme catalyses heme b(in) + ATP + H2O = heme b(out) + ADP + phosphate + H(+). Its function is as follows. Part of the ABC transporter complex CcmAB involved in the biogenesis of c-type cytochromes; once thought to export heme, this seems not to be the case, but its exact role is uncertain. Responsible for energy coupling to the transport system. This Bartonella quintana (strain Toulouse) (Rochalimaea quintana) protein is Cytochrome c biogenesis ATP-binding export protein CcmA.